Reading from the N-terminus, the 501-residue chain is ADP,ATP carrier protein 3 (501 aa).

Helical transmembrane passes span leucine 23 to leucine 43, isoleucine 59 to tyrosine 79, tyrosine 90 to isoleucine 110, tyrosine 146 to tryptophan 166, proline 183 to phenylalanine 203, isoleucine 227 to phenylalanine 247, isoleucine 293 to alanine 313, valine 326 to isoleucine 346, leucine 361 to isoleucine 381, glutamate 383 to isoleucine 403, phenylalanine 446 to threonine 466, and isoleucine 470 to isoleucine 490.

This sequence belongs to the ADP/ATP translocase tlc family.

Its subcellular location is the cell membrane. Its function is as follows. Provides the rickettsial cell with host ATP in exchange for rickettsial ADP. This is an obligate exchange system. This energy acquiring activity is an important component of rickettsial parasitism. The chain is ADP,ATP carrier protein 3 (tlcC) from Rickettsia prowazekii (strain Madrid E).